Reading from the N-terminus, the 658-residue chain is UvrABC system protein B (658 aa).

A Helicase ATP-binding domain is found at 26 to 413; that stretch reads EGINSGKKKQ…SPEVIEQIIR (388 aa). 39–46 lines the ATP pocket; that stretch reads GATGTGKT. Positions 92 to 115 match the Beta-hairpin motif; the sequence is YYDYYQPEAYVPQTDTFIEKDAQI. In terms of domain architecture, Helicase C-terminal spans 430 to 596; that stretch reads QIDDLLGEIQ…TIQKGVRDVI (167 aa). In terms of domain architecture, UVR spans 622 to 657; it reads EKTIAKMEAEMKEAAKALDFERAAELRDLLLELKAE.

Belongs to the UvrB family. As to quaternary structure, forms a heterotetramer with UvrA during the search for lesions. Interacts with UvrC in an incision complex.

The protein localises to the cytoplasm. The UvrABC repair system catalyzes the recognition and processing of DNA lesions. A damage recognition complex composed of 2 UvrA and 2 UvrB subunits scans DNA for abnormalities. Upon binding of the UvrA(2)B(2) complex to a putative damaged site, the DNA wraps around one UvrB monomer. DNA wrap is dependent on ATP binding by UvrB and probably causes local melting of the DNA helix, facilitating insertion of UvrB beta-hairpin between the DNA strands. Then UvrB probes one DNA strand for the presence of a lesion. If a lesion is found the UvrA subunits dissociate and the UvrB-DNA preincision complex is formed. This complex is subsequently bound by UvrC and the second UvrB is released. If no lesion is found, the DNA wraps around the other UvrB subunit that will check the other stand for damage. The polypeptide is UvrABC system protein B (Bacillus cereus (strain ATCC 14579 / DSM 31 / CCUG 7414 / JCM 2152 / NBRC 15305 / NCIMB 9373 / NCTC 2599 / NRRL B-3711)).